A 551-amino-acid chain; its full sequence is Methionine--tRNA ligase (551 aa).

Residues 12 to 22 (PYANGPLHFGH) carry the 'HIGH' region motif. Residues Cys-144, Cys-147, Cys-157, and Cys-160 each coordinate Zn(2+). The short motif at 330 to 334 (QFSKS) is the 'KMSKS' region element. Position 333 (Lys-333) interacts with ATP.

It belongs to the class-I aminoacyl-tRNA synthetase family. MetG type 1 subfamily. As to quaternary structure, monomer. Zn(2+) is required as a cofactor.

Its subcellular location is the cytoplasm. It catalyses the reaction tRNA(Met) + L-methionine + ATP = L-methionyl-tRNA(Met) + AMP + diphosphate. In terms of biological role, is required not only for elongation of protein synthesis but also for the initiation of all mRNA translation through initiator tRNA(fMet) aminoacylation. The chain is Methionine--tRNA ligase from Chlamydia abortus (strain DSM 27085 / S26/3) (Chlamydophila abortus).